The sequence spans 346 residues: Cyclin-dependent kinase 7 (346 aa).

The residue at position 2 (Ala-2) is an N-acetylalanine. Ser-7 carries the phosphoserine modification. Positions 12-295 (YEKLDFLGEG…ASQALKTKYF (284 aa)) constitute a Protein kinase domain. ATP-binding positions include 18–26 (LGEGQFATV) and Lys-41. Asp-137 (proton acceptor) is an active-site residue. Position 164 is a phosphoserine; by CDK1 and CDK2 (Ser-164). Thr-170 carries the post-translational modification Phosphothreonine; by CDK2.

It belongs to the protein kinase superfamily. CMGC Ser/Thr protein kinase family. CDC2/CDKX subfamily. Associates primarily with cyclin-H (CCNH) and MAT1 to form the CAK complex. CAK can further associate with the core-TFIIH to form the TFIIH basal transcription factor; this complex is sensitive to UV light. The CAK complex binds to p53/TP53 in response to DNA damage. Interacts with CDK2, SF1/NR5A1, PUF60 and PRKCI. Interacts with HINT1. Post-translationally, phosphorylation of Ser-164 during mitosis inactivates the enzyme. Phosphorylation of Thr-170 is required for activity. Phosphorylated at Ser-164 and Thr-170 by CDK2.

It is found in the nucleus. The protein resides in the cytoplasm. It localises to the perinuclear region. The catalysed reaction is L-seryl-[protein] + ATP = O-phospho-L-seryl-[protein] + ADP + H(+). It catalyses the reaction L-threonyl-[protein] + ATP = O-phospho-L-threonyl-[protein] + ADP + H(+). The enzyme catalyses [DNA-directed RNA polymerase] + ATP = phospho-[DNA-directed RNA polymerase] + ADP + H(+). Phosphorylation at Thr-170 is required for enzymatic activity. The association of p53/TP53 to the CAK complex in response to DNA damage reduces kinase activity toward CDK2 and RNA polymerase II repetitive C-terminal domain (CTD), thus stopping cell cycle progression. Functionally, serine/threonine kinase involved in cell cycle control and in RNA polymerase II-mediated RNA transcription. Cyclin-dependent kinases (CDKs) are activated by the binding to a cyclin and mediate the progression through the cell cycle. Each different complex controls a specific transition between 2 subsequent phases in the cell cycle. Required for both activation and complex formation of CDK1/cyclin-B during G2-M transition, and for activation of CDK2/cyclins during G1-S transition (but not complex formation). CDK7 is the catalytic subunit of the CDK-activating kinase (CAK) complex. Phosphorylates SPT5/SUPT5H, SF1/NR5A1, POLR2A, p53/TP53, CDK1, CDK2, CDK4, CDK6 and CDK11B/CDK11. Initiates transcription by RNA polymerase II by mediating phosphorylation of POLR2A at 'Ser-5' of the repetitive C-terminal domain (CTD) when POLR2A is in complex with DNA, promoting dissociation from DNA and initiation. CAK activates the cyclin-associated kinases CDK1, CDK2, CDK4 and CDK6 by threonine phosphorylation, thus regulating cell cycle progression. CAK complexed to the core-TFIIH basal transcription factor activates RNA polymerase II by serine phosphorylation of the CTD of POLR2A, allowing its escape from the promoter and elongation of the transcripts. Its expression and activity are constant throughout the cell cycle. Upon DNA damage, triggers p53/TP53 activation by phosphorylation, but is inactivated in turn by p53/TP53; this feedback loop may lead to an arrest of the cell cycle and of the transcription, helping in cell recovery, or to apoptosis. Required for DNA-bound peptides-mediated transcription and cellular growth inhibition. This chain is Cyclin-dependent kinase 7 (Cdk7), found in Mus musculus (Mouse).